We begin with the raw amino-acid sequence, 335 residues long: Succinylglutamate desuccinylase (335 aa).

Residues His59, Glu62, and His151 each coordinate Zn(2+). Glu215 is a catalytic residue.

It belongs to the AspA/AstE family. Succinylglutamate desuccinylase subfamily. It depends on Zn(2+) as a cofactor.

It catalyses the reaction N-succinyl-L-glutamate + H2O = L-glutamate + succinate. It functions in the pathway amino-acid degradation; L-arginine degradation via AST pathway; L-glutamate and succinate from L-arginine: step 5/5. Functionally, transforms N(2)-succinylglutamate into succinate and glutamate. In Pseudomonas putida (strain ATCC 47054 / DSM 6125 / CFBP 8728 / NCIMB 11950 / KT2440), this protein is Succinylglutamate desuccinylase.